A 454-amino-acid chain; its full sequence is Tubulin alpha chain (454 aa).

GTP contacts are provided by Gln12, Asp72, Ser141, Gly145, Thr146, Thr180, Asn207, and Asn229. Asp72 is a Mg(2+) binding site. Glu255 is a catalytic residue.

This sequence belongs to the tubulin family. In terms of assembly, dimer of alpha and beta chains. A typical microtubule is a hollow water-filled tube with an outer diameter of 25 nm and an inner diameter of 15 nM. Alpha-beta heterodimers associate head-to-tail to form protofilaments running lengthwise along the microtubule wall with the beta-tubulin subunit facing the microtubule plus end conferring a structural polarity. Microtubules usually have 13 protofilaments but different protofilament numbers can be found in some organisms and specialized cells. The cofactor is Mg(2+).

It localises to the cytoplasm. It is found in the cytoskeleton. It carries out the reaction GTP + H2O = GDP + phosphate + H(+). Tubulin is the major constituent of microtubules, a cylinder consisting of laterally associated linear protofilaments composed of alpha- and beta-tubulin heterodimers. Microtubules grow by the addition of GTP-tubulin dimers to the microtubule end, where a stabilizing cap forms. Below the cap, tubulin dimers are in GDP-bound state, owing to GTPase activity of alpha-tubulin. The sequence is that of Tubulin alpha chain (TUB1) from Colletotrichum orbiculare (strain 104-T / ATCC 96160 / CBS 514.97 / LARS 414 / MAFF 240422) (Cucumber anthracnose fungus).